Reading from the N-terminus, the 707-residue chain is Polyribonucleotide nucleotidyltransferase (707 aa).

Asp484 and Asp490 together coordinate Mg(2+). The KH domain occupies 551–610 (PRVVRMVVNPEKIRDIIGPAGKTITKIISETGVKIDIEEDGRLYITAPNLEAGERAKQMI). Residues 620–688 (GGIYLGKVLR…KLGRIVLSRK (69 aa)) form the S1 motif domain. The tract at residues 688 to 707 (KDAMPDEEESDNRKSDNRKK) is disordered. A compositionally biased stretch (basic and acidic residues) spans 698–707 (DNRKSDNRKK).

The protein belongs to the polyribonucleotide nucleotidyltransferase family. Requires Mg(2+) as cofactor.

The protein resides in the cytoplasm. It carries out the reaction RNA(n+1) + phosphate = RNA(n) + a ribonucleoside 5'-diphosphate. Functionally, involved in mRNA degradation. Catalyzes the phosphorolysis of single-stranded polyribonucleotides processively in the 3'- to 5'-direction. This Caldanaerobacter subterraneus subsp. tengcongensis (strain DSM 15242 / JCM 11007 / NBRC 100824 / MB4) (Thermoanaerobacter tengcongensis) protein is Polyribonucleotide nucleotidyltransferase.